The sequence spans 498 residues: ATP synthase subunit beta, chloroplastic (498 aa).

172-179 (GGAGVGKT) is a binding site for ATP.

This sequence belongs to the ATPase alpha/beta chains family. As to quaternary structure, F-type ATPases have 2 components, CF(1) - the catalytic core - and CF(0) - the membrane proton channel. CF(1) has five subunits: alpha(3), beta(3), gamma(1), delta(1), epsilon(1). CF(0) has four main subunits: a(1), b(1), b'(1) and c(9-12).

The protein resides in the plastid. It is found in the chloroplast thylakoid membrane. It catalyses the reaction ATP + H2O + 4 H(+)(in) = ADP + phosphate + 5 H(+)(out). In terms of biological role, produces ATP from ADP in the presence of a proton gradient across the membrane. The catalytic sites are hosted primarily by the beta subunits. The protein is ATP synthase subunit beta, chloroplastic of Oenothera biennis (German evening primrose).